The sequence spans 202 residues: FMN reductase (NADH) RutF (202 aa).

Positions 168 to 191 (PRAPRGGSAPAEPARGARAIGARP) are enriched in low complexity. Positions 168–202 (PRAPRGGSAPAEPARGARAIGARPPEGPVLALRSA) are disordered.

Belongs to the non-flavoprotein flavin reductase family. RutF subfamily.

It carries out the reaction FMNH2 + NAD(+) = FMN + NADH + 2 H(+). Its function is as follows. Catalyzes the reduction of FMN to FMNH2 which is used to reduce pyrimidine by RutA via the Rut pathway. The polypeptide is FMN reductase (NADH) RutF (Methylorubrum populi (strain ATCC BAA-705 / NCIMB 13946 / BJ001) (Methylobacterium populi)).